A 321-amino-acid polypeptide reads, in one-letter code: ATP-dependent 6-phosphofructokinase (321 aa).

G12 serves as a coordination point for ATP. ADP-binding positions include 22–26 (RGVVR) and 55–60 (RYSVSD). Residues 73–74 (RF) and 103–106 (GDGS) contribute to the ATP site. D104 provides a ligand contact to Mg(2+). A substrate-binding site is contributed by 127 to 129 (TID). Catalysis depends on D129, which acts as the Proton acceptor. Residue R156 coordinates ADP. Substrate-binding positions include R164 and 171–173 (MGR). Residues 187 to 189 (GCE), K213, and 215 to 217 (KRH) each bind ADP. Substrate-binding positions include E224, R245, and 251-254 (HIQR).

The protein belongs to the phosphofructokinase type A (PFKA) family. ATP-dependent PFK group I subfamily. Prokaryotic clade 'B1' sub-subfamily. As to quaternary structure, homotetramer. Mg(2+) serves as cofactor.

It is found in the cytoplasm. The enzyme catalyses beta-D-fructose 6-phosphate + ATP = beta-D-fructose 1,6-bisphosphate + ADP + H(+). It functions in the pathway carbohydrate degradation; glycolysis; D-glyceraldehyde 3-phosphate and glycerone phosphate from D-glucose: step 3/4. Its activity is regulated as follows. Allosterically activated by ADP and other diphosphonucleosides, and allosterically inhibited by phosphoenolpyruvate. Functionally, catalyzes the phosphorylation of D-fructose 6-phosphate to fructose 1,6-bisphosphate by ATP, the first committing step of glycolysis. The chain is ATP-dependent 6-phosphofructokinase from Histophilus somni (strain 129Pt) (Haemophilus somnus).